Reading from the N-terminus, the 1080-residue chain is Carbamoyl phosphate synthase large chain (1080 aa).

The segment at Met-1–Glu-403 is carboxyphosphate synthetic domain. The ATP site is built by Arg-129, Arg-169, Gly-175, Gly-176, Glu-208, Val-210, Glu-215, Gly-241, Val-242, His-243, Gln-285, and Glu-299. Residues Arg-133–Val-328 form the ATP-grasp 1 domain. Residues Gln-285, Glu-299, and Asn-301 each contribute to the Mg(2+) site. Residues Gln-285, Glu-299, and Asn-301 each coordinate Mn(2+). An oligomerization domain region spans residues Thr-404–Ala-554. Residues Ala-555–Asp-942 are carbamoyl phosphate synthetic domain. Residues Gln-679–Thr-876 enclose the ATP-grasp 2 domain. Positions 715, 754, 756, 761, 787, 788, 789, 790, 830, and 847 each coordinate ATP. Residues Gln-830, Glu-847, and Asn-849 each contribute to the Mg(2+) site. Gln-830, Glu-847, and Asn-849 together coordinate Mn(2+). The region spanning Ile-943–Val-1080 is the MGS-like domain. Residues Ile-943 to Val-1080 are allosteric domain.

Belongs to the CarB family. In terms of assembly, composed of two chains; the small (or glutamine) chain promotes the hydrolysis of glutamine to ammonia, which is used by the large (or ammonia) chain to synthesize carbamoyl phosphate. Tetramer of heterodimers (alpha,beta)4. Requires Mg(2+) as cofactor. Mn(2+) is required as a cofactor.

The enzyme catalyses hydrogencarbonate + L-glutamine + 2 ATP + H2O = carbamoyl phosphate + L-glutamate + 2 ADP + phosphate + 2 H(+). It catalyses the reaction hydrogencarbonate + NH4(+) + 2 ATP = carbamoyl phosphate + 2 ADP + phosphate + 2 H(+). The protein operates within amino-acid biosynthesis; L-arginine biosynthesis; carbamoyl phosphate from bicarbonate: step 1/1. It functions in the pathway pyrimidine metabolism; UMP biosynthesis via de novo pathway; (S)-dihydroorotate from bicarbonate: step 1/3. Its function is as follows. Large subunit of the glutamine-dependent carbamoyl phosphate synthetase (CPSase). CPSase catalyzes the formation of carbamoyl phosphate from the ammonia moiety of glutamine, carbonate, and phosphate donated by ATP, constituting the first step of 2 biosynthetic pathways, one leading to arginine and/or urea and the other to pyrimidine nucleotides. The large subunit (synthetase) binds the substrates ammonia (free or transferred from glutamine from the small subunit), hydrogencarbonate and ATP and carries out an ATP-coupled ligase reaction, activating hydrogencarbonate by forming carboxy phosphate which reacts with ammonia to form carbamoyl phosphate. The polypeptide is Carbamoyl phosphate synthase large chain (Xylella fastidiosa (strain 9a5c)).